We begin with the raw amino-acid sequence, 602 residues long: Elongation factor 4 (602 aa).

Residues 7–189 enclose the tr-type G domain; it reads KYIRNFSIVA…AIVNKVPAPD (183 aa). Residues 19–24 and 136–139 contribute to the GTP site; these read DHGKST and NKID.

Belongs to the TRAFAC class translation factor GTPase superfamily. Classic translation factor GTPase family. LepA subfamily.

The protein resides in the cell membrane. The enzyme catalyses GTP + H2O = GDP + phosphate + H(+). In terms of biological role, required for accurate and efficient protein synthesis under certain stress conditions. May act as a fidelity factor of the translation reaction, by catalyzing a one-codon backward translocation of tRNAs on improperly translocated ribosomes. Back-translocation proceeds from a post-translocation (POST) complex to a pre-translocation (PRE) complex, thus giving elongation factor G a second chance to translocate the tRNAs correctly. Binds to ribosomes in a GTP-dependent manner. This is Elongation factor 4 from Clostridium botulinum (strain Kyoto / Type A2).